We begin with the raw amino-acid sequence, 311 residues long: Cytochrome f (311 aa).

A signal peptide spans 1–27; it reads MRRHLSLLIGSLVLGLSLLIAPAASWA. Heme-binding residues include tyrosine 28, cysteine 48, cysteine 51, and histidine 52. Residues 277 to 297 traverse the membrane as a helical segment; sequence IYGLLAFFAAVALAQIMLVLK.

This sequence belongs to the cytochrome f family. As to quaternary structure, the 4 large subunits of the cytochrome b6-f complex are cytochrome b6, subunit IV (17 kDa polypeptide, PetD), cytochrome f and the Rieske protein, while the 4 small subunits are PetG, PetL, PetM and PetN. The complex functions as a dimer. It depends on heme as a cofactor.

It localises to the cellular thylakoid membrane. Component of the cytochrome b6-f complex, which mediates electron transfer between photosystem II (PSII) and photosystem I (PSI), cyclic electron flow around PSI, and state transitions. The protein is Cytochrome f of Parasynechococcus marenigrum (strain WH8102).